Reading from the N-terminus, the 281-residue chain is ATP phosphoribosyltransferase (281 aa).

This sequence belongs to the ATP phosphoribosyltransferase family. Long subfamily. Requires Mg(2+) as cofactor.

Its subcellular location is the cytoplasm. The enzyme catalyses 1-(5-phospho-beta-D-ribosyl)-ATP + diphosphate = 5-phospho-alpha-D-ribose 1-diphosphate + ATP. It participates in amino-acid biosynthesis; L-histidine biosynthesis; L-histidine from 5-phospho-alpha-D-ribose 1-diphosphate: step 1/9. Feedback inhibited by histidine. Functionally, catalyzes the condensation of ATP and 5-phosphoribose 1-diphosphate to form N'-(5'-phosphoribosyl)-ATP (PR-ATP). Has a crucial role in the pathway because the rate of histidine biosynthesis seems to be controlled primarily by regulation of HisG enzymatic activity. The polypeptide is ATP phosphoribosyltransferase (Corynebacterium diphtheriae (strain ATCC 700971 / NCTC 13129 / Biotype gravis)).